The sequence spans 118 residues: Large ribosomal subunit protein bL20 (118 aa).

The protein belongs to the bacterial ribosomal protein bL20 family.

Its function is as follows. Binds directly to 23S ribosomal RNA and is necessary for the in vitro assembly process of the 50S ribosomal subunit. It is not involved in the protein synthesizing functions of that subunit. The polypeptide is Large ribosomal subunit protein bL20 (Buchnera aphidicola subsp. Acyrthosiphon pisum (strain 5A)).